We begin with the raw amino-acid sequence, 512 residues long: PTS system mannitol-specific EIICB component (512 aa).

Over 1 to 28 (MSQTEEKKGIGRRVQAFGSFLSSMIMPN) the chain is Cytoplasmic. The PTS EIIC type-2 domain occupies 17–349 (FGSFLSSMIM…MKFTKEPKQD (333 aa)). The helical transmembrane segment at 29-50 (IGAFIAWGFIAAIFIDNGWFPN) threads the bilayer. Residues 51-54 (KDLA) lie on the Extracellular side of the membrane. The chain crosses the membrane as a helical span at residues 55-75 (TLAGPMITYLIPLLIAFSGGR). The Cytoplasmic portion of the chain corresponds to 76–139 (LIYDLRGGII…QGFEMLFNNF (64 aa)). A helical transmembrane segment spans residues 140–161 (SAGILGFIMTIAGFKILAPLMK). Residues 162–170 (FIMHILSVA) lie on the Extracellular side of the membrane. A helical membrane pass occupies residues 171-191 (VEALVHAHLLPLVSILVEPAK). Residues 192 to 278 (IVFLNNAINH…VLMRPLLFIA (87 aa)) lie on the Cytoplasmic side of the membrane. The helical transmembrane segment at 279-298 (VILGGMTGVATYQATGFGFK) threads the bilayer. At 299–318 (SPASPGSFIVYCLNAPRGEF) the chain is on the extracellular side. The helical transmembrane segment at 319–340 (LHMLLGVFLATLVSFVVAALIM) threads the bilayer. Topologically, residues 341-512 (KFTKEPKQDL…LNNLKKDDQA (172 aa)) are cytoplasmic. Positions 365 to 376 (SSVASKLVSSDK) are enriched in low complexity. A disordered region spans residues 365 to 401 (SSVASKLVSSDKNVNTEENASGNVSETSSLDDDPEAL). Over residues 380–392 (TEENASGNVSETS) the composition is skewed to polar residues. The PTS EIIB type-2 domain maps to 419 to 512 (NHVIFACDAG…LNNLKKDDQA (94 aa)). The Phosphocysteine intermediate; for EIIB activity role is filled by Cys425. At Cys425 the chain carries Phosphocysteine; by EIIA.

In terms of assembly, homodimer.

Its subcellular location is the cell membrane. The enzyme catalyses D-mannitol(out) + N(pros)-phospho-L-histidyl-[protein] = D-mannitol 1-phosphate(in) + L-histidyl-[protein]. In terms of biological role, the phosphoenolpyruvate-dependent sugar phosphotransferase system (sugar PTS), a major carbohydrate active transport system, catalyzes the phosphorylation of incoming sugar substrates concomitantly with their translocation across the cell membrane. The enzyme II CmtAB PTS system is involved in D-mannitol transport. In Staphylococcus aureus (strain MRSA252), this protein is PTS system mannitol-specific EIICB component (mtlA).